Reading from the N-terminus, the 408-residue chain is FAD-dependent monooxygenase nscC (408 aa).

The first 20 residues, 1–20 (MAPPLPILIIGAGISGLTTA), serve as a signal peptide directing secretion. FAD contacts are provided by E34 and A45. N91 and N103 each carry an N-linked (GlcNAc...) asparagine glycan. R119 serves as a coordination point for FAD. 2 N-linked (GlcNAc...) asparagine glycosylation sites follow: N170 and N231. FAD is bound by residues D328 and G341.

The protein belongs to the paxM FAD-dependent monooxygenase family. FAD is required as a cofactor.

It functions in the pathway secondary metabolite biosynthesis. FAD-dependent monooxygenase; part of the gene cluster that mediates the biosynthesis of neosartoricin, a prenylated anthracenone that exhibits T-cell antiproliferative activity, suggestive of a physiological role as an immunosuppressive agent. The non-reducing polyketide synthase nscA probably synthesizes and cyclizes the decaketide backbone. The hydrolase nscB then mediates the product release through hydrolysis followed by spontaneous decarboxylation. The prenyltransferase nscD catalyzes the addition of the dimethylallyl group to the aromatic C5. The FAD-dependent monooxygenase nscC is then responsible for the stereospecific hydroxylation at C2. There is no gene encoding O-acetyltransferase in the nsc gene cluster; thus, the last step of 2-O-acetylation leading to neosartoricin may be catalyzed by an unidentified O-acetyltransferase. The chain is FAD-dependent monooxygenase nscC from Neosartorya fischeri (strain ATCC 1020 / DSM 3700 / CBS 544.65 / FGSC A1164 / JCM 1740 / NRRL 181 / WB 181) (Aspergillus fischerianus).